We begin with the raw amino-acid sequence, 201 residues long: Regulator of G-protein signaling 1 (201 aa).

Residues 75–191 (SLEKLLISED…LKSEIFLRLA (117 aa)) enclose the RGS domain.

It localises to the cell membrane. The protein resides in the cytoplasm. The protein localises to the cytosol. Its function is as follows. Regulates G protein-coupled receptor signaling cascades, including signaling downstream of the N-formylpeptide chemoattractant receptors and leukotriene receptors. Inhibits B cell chemotaxis. Inhibits signal transduction by increasing the GTPase activity of G protein alpha subunits, thereby driving them into their inactive GDP-bound form. The sequence is that of Regulator of G-protein signaling 1 (rgs1) from Xenopus tropicalis (Western clawed frog).